A 766-amino-acid chain; its full sequence is Ribonuclease Z, mitochondrial (766 aa).

The transit peptide at 1 to 25 (MYLVKSAGSPIYRTLRTLTTSNLMA) directs the protein to the mitochondrion.

The protein belongs to the RNase Z family. As to quaternary structure, homodimer. It depends on Zn(2+) as a cofactor.

Its subcellular location is the nucleus. It is found in the mitochondrion. It carries out the reaction Endonucleolytic cleavage of RNA, removing extra 3' nucleotides from tRNA precursor, generating 3' termini of tRNAs. A 3'-hydroxy group is left at the tRNA terminus and a 5'-phosphoryl group is left at the trailer molecule.. Its function is as follows. Zinc phosphodiesterase, which displays some tRNA 3'-processing endonuclease activity of nuclear and mitochondrial pre-tRNA. Probably involved in tRNA maturation, by removing a 3'-trailer from precursor tRNA. May participate in tRNA processing in the developing embryo. The polypeptide is Ribonuclease Z, mitochondrial (Drosophila melanogaster (Fruit fly)).